Here is a 553-residue protein sequence, read N- to C-terminus: MSDIALTVSILALVAVVGLFIGNVKFRGIGLGIGGVLFGGIIVGHFVSQAGMTLSSDMLHVIQEFGLILFVYTIGIQVGPGFFASLRVSGLRLNLFAVLIVIIGGLVTAILHKLFDIPLPVVLGIFSGAVTNTPALGAGQQILRDLGTPMEMVDQMGMSYAMAYPFGICGILFTMWMLRVIFRVNVETEAQQHESSRTNGGALIRTINIRVENPNLHDLAIKDVPILNGDKIICSRLKREETLKVPSPDTIIQLGDLLHLVGQPADLHNAQLVIGQEVDTSLSTKGTDLRVERVVVTNENVLGKRIRDLHFKERYDVVISRLNRAGVELVASGDISLQFGDILNLVGRPSAIDAVANVLGNAQQKLQQVQMLPVFIGIGLGVLLGSIPVFVPGFPAALKLGLAGGPLIMALILGRIGSIGKLYWFMPPSANLALRELGIVLFLSVVGLKSGGDFVNTLVNGEGLSWIGYGALITAVPLITVGILARMLAKMNYLTMCGMLAGSMTDPPALAFANNLHPTSGAAALSYATVYPLVMFLRIITPQLLAVLFWSIG.

5 helical membrane-spanning segments follow: residues 4-24 (IALT…IGNV), 28-48 (GIGL…HFVS), 65-85 (FGLI…FFAS), 95-115 (LFAV…HKLF), and 158-178 (MSYA…MWML). RCK C-terminal domains follow at residues 191–276 (QQHE…VIGQ) and 279–361 (DTSL…VLGN). Helical transmembrane passes span 371-391 (MLPV…PVFV), 393-413 (GFPA…ALIL), 439-459 (IVLF…NTLV), 464-484 (LSWI…VGIL), 493-513 (YLTM…LAFA), and 533-553 (LVMF…WSIG).

This sequence belongs to the AAE transporter (TC 2.A.81) family. YidE subfamily.

The protein localises to the cell membrane. This chain is Putative transport protein YidE, found in Escherichia coli O7:K1 (strain IAI39 / ExPEC).